The primary structure comprises 85 residues: Platelet factor 4 (85 aa).

Cystine bridges form between C25/C51 and C27/C67. Residue S41 is modified to Phosphoserine. Position 76–82 (K76–L82) interacts with heparin.

The protein belongs to the intercrine alpha (chemokine CxC) family. In terms of assembly, homotetramer. Interacts with TNFAIP6 (via Link domain). Interacts with CCR1. Interacts with CXCR3. Interacts with THBD; this interaction enhances generation of activated protein C.

It is found in the secreted. In terms of biological role, chemokine released during platelet aggregation that plays a role in different biological processes including hematopoiesis, cell proliferation, differentiation, and activation. Acts via different functional receptors including CCR1, CXCR3A or CXCR3B. Upon interaction with CXCR3A receptor, induces activated T-lymphocytes migration mediated via downstream Ras/extracellular signal-regulated kinase (ERK) signaling. Neutralizes the anticoagulant effect of heparin by binding more strongly to heparin than to the chondroitin-4-sulfate chains of the carrier molecule. Plays a role in the inhibition of hematopoiesis and in the maintenance of hematopoietic stem cell (HSC) quiescence. Chemotactic for neutrophils and monocytes via CCR1. Inhibits endothelial cell proliferation. In cooperation with toll-like receptor 8/TLR8, induces chromatin remodeling and activates inflammatory gene expression via the TBK1-IRF5 axis. In addition, induces myofibroblast differentiation and collagen synthesis in different precursor cells, including endothelial cells, by stimulating endothelial-to-mesenchymal transition. Interacts with thrombomodulin/THBD to enhance the activation of protein C and thus potentiates its anticoagulant activity. This is Platelet factor 4 (PF4) from Ovis aries (Sheep).